The chain runs to 450 residues: Cysteine protease ATG4C (450 aa).

Residue C112 is the Nucleophile of the active site. Active-site residues include D336 and H338.

Belongs to the peptidase C54 family.

The protein localises to the cytoplasm. It catalyses the reaction [protein]-C-terminal L-amino acid-glycyl-phosphatidylethanolamide + H2O = [protein]-C-terminal L-amino acid-glycine + a 1,2-diacyl-sn-glycero-3-phosphoethanolamine. In terms of biological role, cysteine protease that plays a key role in autophagy by mediating both proteolytic activation and delipidation of ATG8 family proteins. The protease activity is required for proteolytic activation of ATG8 family proteins: cleaves the C-terminal amino acid of ATG8 proteins to reveal a C-terminal glycine. Exposure of the glycine at the C-terminus is essential for ATG8 proteins conjugation to phosphatidylethanolamine (PE) and insertion to membranes, which is necessary for autophagy. In addition to the protease activity, also mediates delipidation of ATG8 family proteins. Catalyzes delipidation of PE-conjugated forms of ATG8 proteins during macroautophagy. This Xenopus tropicalis (Western clawed frog) protein is Cysteine protease ATG4C.